A 101-amino-acid chain; its full sequence is NADH-quinone oxidoreductase subunit K (101 aa).

The next 3 helical transmembrane spans lie at 4–24 (LSHYLVLGAILFAISVVGIFL), 30–50 (IVLLMAIELMLLAVNLNFIAF), and 61–81 (IFVFFILTVAAAESAIGLAIL).

Belongs to the complex I subunit 4L family. As to quaternary structure, NDH-1 is composed of 14 different subunits. Subunits NuoA, H, J, K, L, M, N constitute the membrane sector of the complex.

Its subcellular location is the cell inner membrane. It carries out the reaction a quinone + NADH + 5 H(+)(in) = a quinol + NAD(+) + 4 H(+)(out). In terms of biological role, NDH-1 shuttles electrons from NADH, via FMN and iron-sulfur (Fe-S) centers, to quinones in the respiratory chain. The immediate electron acceptor for the enzyme in this species is believed to be ubiquinone. Couples the redox reaction to proton translocation (for every two electrons transferred, four hydrogen ions are translocated across the cytoplasmic membrane), and thus conserves the redox energy in a proton gradient. The chain is NADH-quinone oxidoreductase subunit K from Aromatoleum aromaticum (strain DSM 19018 / LMG 30748 / EbN1) (Azoarcus sp. (strain EbN1)).